Reading from the N-terminus, the 195-residue chain is MAKARRRRVRDTWKEKKWYVIKSPKLFGENEIGTTPSRDPDFLLKRRVEATMRELTGDFSKQYVKLKFQIDSVAGSEATTRFIGHQVTTDYVRSMIRRGTSRVDAPVIVETKDGYKLKVHPLAITIRRAKSSQQKYMRQSIEEHLREIASEKTFEELVEGIVTGKIASEIYHQAKKIYPLKRVEIIKSRVLEEPA.

Belongs to the eukaryotic ribosomal protein eS1 family.

This is Small ribosomal subunit protein eS1 from Methanothermobacter thermautotrophicus (strain ATCC 29096 / DSM 1053 / JCM 10044 / NBRC 100330 / Delta H) (Methanobacterium thermoautotrophicum).